Here is a 100-residue protein sequence, read N- to C-terminus: Transcription and mRNA export factor SUS1 (100 aa).

Belongs to the ENY2 family. Component of the nuclear pore complex (NPC)-associated TREX-2 complex (transcription and export complex 2), composed of at least SUS1, SAC3, THP1, SEM1, and CDC31. TREX-2 contains 2 SUS1 chains. The TREX-2 complex interacts with the nucleoporin NUP1. Component of the 1.8 MDa SAGA transcription coactivator-HAT complex. SAGA is built of 5 distinct domains with specialized functions. Within the SAGA complex, SUS1, SGF11, SGF73 and UBP8 form an additional subcomplex of SAGA called the DUB module (deubiquitination module). Interacts directly with THP1, SAC3, SGF11, and with the RNA polymerase II.

Its subcellular location is the nucleus. The protein resides in the nucleoplasm. The protein localises to the cytoplasm. It is found in the P-body. In terms of biological role, involved in mRNA export coupled transcription activation by association with both the TREX-2 and the SAGA complexes. At the promoters, SAGA is required for recruitment of the basal transcription machinery. It influences RNA polymerase II transcriptional activity through different activities such as TBP interaction and promoter selectivity, interaction with transcription activators, and chromatin modification through histone acetylation and deubiquitination. Within the SAGA complex, participates in a subcomplex required for deubiquitination of H2B and for the maintenance of steady-state H3 methylation levels. The TREX-2 complex functions in docking export-competent ribonucleoprotein particles (mRNPs) to the nuclear entrance of the nuclear pore complex (nuclear basket). TREX-2 participates in mRNA export and accurate chromatin positioning in the nucleus by tethering genes to the nuclear periphery. May also be involved in cytoplasmic mRNA decay by interaction with components of P-bodies. The protein is Transcription and mRNA export factor SUS1 of Cryptococcus neoformans var. neoformans serotype D (strain B-3501A) (Filobasidiella neoformans).